Here is an 822-residue protein sequence, read N- to C-terminus: Ras GTPase-activating-like protein rgaA (822 aa).

Residues 1 to 36 form a disordered region; the sequence is MNKEEYSDISDSESEEVHETNNHNEHEHEEEDDTPE. Basic and acidic residues predominate over residues 15–27; sequence EEVHETNNHNEHE. Residues 104-152 adopt a coiled-coil conformation; that stretch reads EDKESDWIAEIQELKRNLVSEVRRNHTLERDLNRLDKRIALLIKNRGNI. The required for interaction to rac1A stretch occupies residues 161-822; sequence GLKAPKHKGD…IHLLNKLFLY (662 aa). The region spanning 234–477 is the Ras-GAP domain; that stretch reads FLLLSLYRLS…GDIKNYLQEI (244 aa).

Heterotetramer. Quaternary complex with activated rac1A, ctxA and ctxB. Interacts directly with rac1A and ctxA. Preferentially interacts with activated forms of rac1A, rac1B and rac1C. Interacts with racE.

The protein localises to the cytoplasm. It is found in the cell cortex. Its subcellular location is the cleavage furrow. Functionally, part of signaling pathway that is required for completion of cytokinesis. gapA and rgaA control cortexillin localization to the cleavage furrow and hence may be involved in cleavage of the midbody in the final stage of cytokinesis by regulating the actin cytoskeleton. Forms a complex by linking activated rac1A to ctxA. Assembly of this complex is necessary for the recruitment of cortexillin to the midzone of a dividing cell. Overexpression leads to the suppression of the formation of cellular projections containing F-actin and to a defect in cytokinesis. The polypeptide is Ras GTPase-activating-like protein rgaA (rgaA) (Dictyostelium discoideum (Social amoeba)).